A 459-amino-acid chain; its full sequence is Kelch-like protein terF (459 aa).

Kelch repeat units follow at residues 92 to 144 (STVV…LVGD), 145 to 196 (EIFV…VVDG), 198 to 248 (IYYL…TVVV), 251 to 304 (TIYL…IYRD), 306 to 354 (LYIL…TIGS), and 355 to 405 (LIFT…VYKG).

The protein operates within secondary metabolite biosynthesis. Functionally, kelch-like protein; part of the gene cluster that mediates the biosynthesis of terrein, a fungal metabolite with ecological, antimicrobial, antiproliferative, and antioxidative activities. The first step in the pathway is performed by the polyketide synthase terA that produces 4-hydroxy-6-methylpyranon (4-HMP), orsellinic acid (OA), and 2,3-dehydro-6-hydroxymellein (2,3-dehydro-6-HM) by condensing acetyl-CoA with two, three, or four malonyl-CoA units, respectively. 4-HMP and OA are not pathway intermediates, but are rather shunt or side products. 2,3-dehydro-6-HM is further converted to 6-hydroxymellein (6-HM) by the 6-hydroxymellein synthase terB. The monooxygenases terC and terD, the multicopper oxidase terE and the Kelch-like protein terF are then involved in the transformation of 6-HM to terrein. Even if they are co-regulated with the other terrein cluster genes, terH and terI seem to be dispensable for terrein production; whereas one or both of the 2 transporters terG and terJ are probably required for efficient secretion of metabolites. This chain is Kelch-like protein terF, found in Aspergillus terreus (strain NIH 2624 / FGSC A1156).